The sequence spans 113 residues: Small ribosomal subunit protein uS17 (113 aa).

Belongs to the universal ribosomal protein uS17 family. As to quaternary structure, part of the 30S ribosomal subunit.

One of the primary rRNA binding proteins, it binds specifically to the 5'-end of 16S ribosomal RNA. This chain is Small ribosomal subunit protein uS17, found in Nanoarchaeum equitans (strain Kin4-M).